The chain runs to 284 residues: ATP phosphoribosyltransferase (284 aa).

This sequence belongs to the ATP phosphoribosyltransferase family. Long subfamily. Mg(2+) serves as cofactor.

It is found in the cytoplasm. The enzyme catalyses 1-(5-phospho-beta-D-ribosyl)-ATP + diphosphate = 5-phospho-alpha-D-ribose 1-diphosphate + ATP. The protein operates within amino-acid biosynthesis; L-histidine biosynthesis; L-histidine from 5-phospho-alpha-D-ribose 1-diphosphate: step 1/9. With respect to regulation, feedback inhibited by histidine. In terms of biological role, catalyzes the condensation of ATP and 5-phosphoribose 1-diphosphate to form N'-(5'-phosphoribosyl)-ATP (PR-ATP). Has a crucial role in the pathway because the rate of histidine biosynthesis seems to be controlled primarily by regulation of HisG enzymatic activity. The polypeptide is ATP phosphoribosyltransferase (Pseudarthrobacter chlorophenolicus (strain ATCC 700700 / DSM 12829 / CIP 107037 / JCM 12360 / KCTC 9906 / NCIMB 13794 / A6) (Arthrobacter chlorophenolicus)).